Consider the following 443-residue polypeptide: Two-pore potassium channel 2 (443 aa).

At 1-144 (MANDGNGDNN…KTDQQSDSKT (144 aa)) the chain is on the cytoplasmic side. The disordered stretch occupies residues 67 to 109 (SLPIDALSQNPSTSSSATTSFSDSTDLLLPLTEPNKPVRKSKP). The segment covering 72–98 (ALSQNPSTSSSATTSFSDSTDLLLPLT) has biased composition (low complexity). The chain crosses the membrane as a helical span at residues 145 to 165 (IVNQAVALLVVYLSLGVLIYW). Positions 181–200 (DALYFCIVTMCTIGYGDITP) form an intramembrane region, pore-forming. The chain crosses the membrane as a helical span at residues 208 to 228 (FSIFFVLVGFGFMDILLSGMV). At 229-274 (TYVLDLQENYMLETARNESLNLNDRDKVRSYIIDVKKGRMRIRLKV) the chain is on the cytoplasmic side. A helical membrane pass occupies residues 275–295 (GLALGVVVLCLGFGVLIMHFV). The pore-forming intramembrane region spans 302–321 (DSFYFSVMSVTTVGYGDRAF). Residues 328-348 (LLAAMWLLVSTLAVARAILFL) form a helical membrane-spanning segment. The Cytoplasmic segment spans residues 349-443 (AESRVDKRNR…TKDLPTATSI (95 aa)). EF-hand domains follow at residues 365–400 (LGESMSISQFLDADIDCNGCVSKAEFVIYKLKKMDK) and 404–439 (KDINPIGFQFDKLDRTNSGRITLLDLLESSTKDLPT). Residues Asp378, Asp380, Asn382, Cys384, Glu389, Asp417, Ser421, Arg423, and Asp428 each contribute to the Ca(2+) site.

It belongs to the two pore domain potassium channel (TC 1.A.1.7) family. As to quaternary structure, homodimer. Expressed in roots, stems, leaves and flowers.

Its subcellular location is the vacuole membrane. In terms of biological role, probable voltage-independent potassium-selective tonoplast ion channel. The sequence is that of Two-pore potassium channel 2 (TPK2) from Arabidopsis thaliana (Mouse-ear cress).